The chain runs to 59 residues: uncharacterized protein (59 aa).

Residues 6 to 26 (WWLVVFAVFVFLFDTLLMQWI) traverse the membrane as a helical segment.

The protein localises to the membrane. This is an uncharacterized protein from Escherichia coli O157:H7.